The following is a 1680-amino-acid chain: GRIP and coiled-coil domain-containing protein 2 (1680 aa).

Met1 is modified (N-acetylmethionine). Residues 1–14 (MEDSAPDAVAAAPS) show a composition bias toward low complexity. 2 disordered regions span residues 1–23 (MEDSAPDAVAAAPSGTPKSKLET) and 1468–1522 (KSEP…SSAG). Residues 31 to 1614 (KFAKKQMMLL…REKSVANLEY (1584 aa)) are a coiled coil. Positions 1469 to 1484 (SEPSTRSPASSHQPSK) are enriched in polar residues. A phosphoserine mark is found at Ser1475 and Ser1479. Residues 1570-1609 (HLNGLLRETEATNAILMEQIKLLKSEIRRLERNQEREKSV) form a mediates interaction with RAB6A region. A mediates interaction with RAB9A region spans residues 1570–1680 (HLNGLLRETE…SYLHSWSGLR (111 aa)). One can recognise a GRIP domain in the interval 1605–1655 (REKSVANLEYLKNVLLRFIFLKPGSERERLLPVIDTMLQLSPEEKGKLATV).

Homodimer. Interacts (via GRIP domain) with RAB6A (preferentially in its GTP-bound form). May interact (RAB6A-dependent) with ARL1; might be involved in GCC2 Golgi localization. Interacts (probably via GRIP domain) with RAB9A (preferentially in its GTP-bound form). Interacts with CLASP1 and CLASP2; recruits both proteins to membranes of the TGN. Interacts with STX16.

Its subcellular location is the cytoplasm. The protein localises to the golgi apparatus. The protein resides in the trans-Golgi network membrane. Its function is as follows. Golgin which probably tethers transport vesicles to the trans-Golgi network (TGN) and regulates vesicular transport between the endosomes and the Golgi. As a RAB9A effector it is involved in recycling of the mannose 6-phosphate receptor from the late endosomes to the TGN. May also play a role in transport between the recycling endosomes and the Golgi. Required for maintenance of the Golgi structure, it is involved in the biogenesis of noncentrosomal, Golgi-associated microtubules through recruitment of CLASP1 and CLASP2. This chain is GRIP and coiled-coil domain-containing protein 2 (Gcc2), found in Mus musculus (Mouse).